The following is a 340-amino-acid chain: Fructose-bisphosphate aldolase (340 aa).

Position 53 (Ser53) interacts with D-glyceraldehyde 3-phosphate. The active-site Proton donor is Asp95. Positions 96, 131, 161, and 212 each coordinate Zn(2+). Gly213 lines the dihydroxyacetone phosphate pocket. His249 is a Zn(2+) binding site. Residues 250 to 252 and 271 to 274 contribute to the dihydroxyacetone phosphate site; these read GGS and NLDT.

It belongs to the class II fructose-bisphosphate aldolase family. Requires Zn(2+) as cofactor.

The enzyme catalyses beta-D-fructose 1,6-bisphosphate = D-glyceraldehyde 3-phosphate + dihydroxyacetone phosphate. The protein operates within carbohydrate degradation; glycolysis; D-glyceraldehyde 3-phosphate and glycerone phosphate from D-glucose: step 4/4. Its function is as follows. Catalyzes the aldol condensation of dihydroxyacetone phosphate (DHAP or glycerone-phosphate) with glyceraldehyde 3-phosphate (G3P) to form fructose 1,6-bisphosphate (FBP) in gluconeogenesis and the reverse reaction in glycolysis. This is Fructose-bisphosphate aldolase (fba) from Streptomyces galbus.